The chain runs to 338 residues: Ketol-acid reductoisomerase (NADP(+)) (338 aa).

A KARI N-terminal Rossmann domain is found at 1-181 (MKVYYDKDAD…GGGRTGIIET (181 aa)). Residues 24–27 (YGSQ), R47, S50, S52, and 82–85 (DEFQ) each bind NADP(+). Residue H107 is part of the active site. Position 133 (G133) interacts with NADP(+). One can recognise a KARI C-terminal knotted domain in the interval 182–327 (TFKDETETDL…AKLRSMMPWI (146 aa)). Mg(2+) contacts are provided by D190, E194, E226, and E230. Residue S251 coordinates substrate.

It belongs to the ketol-acid reductoisomerase family. It depends on Mg(2+) as a cofactor.

It catalyses the reaction (2R)-2,3-dihydroxy-3-methylbutanoate + NADP(+) = (2S)-2-acetolactate + NADPH + H(+). It carries out the reaction (2R,3R)-2,3-dihydroxy-3-methylpentanoate + NADP(+) = (S)-2-ethyl-2-hydroxy-3-oxobutanoate + NADPH + H(+). Its pathway is amino-acid biosynthesis; L-isoleucine biosynthesis; L-isoleucine from 2-oxobutanoate: step 2/4. It participates in amino-acid biosynthesis; L-valine biosynthesis; L-valine from pyruvate: step 2/4. Its function is as follows. Involved in the biosynthesis of branched-chain amino acids (BCAA). Catalyzes an alkyl-migration followed by a ketol-acid reduction of (S)-2-acetolactate (S2AL) to yield (R)-2,3-dihydroxy-isovalerate. In the isomerase reaction, S2AL is rearranged via a Mg-dependent methyl migration to produce 3-hydroxy-3-methyl-2-ketobutyrate (HMKB). In the reductase reaction, this 2-ketoacid undergoes a metal-dependent reduction by NADPH to yield (R)-2,3-dihydroxy-isovalerate. The chain is Ketol-acid reductoisomerase (NADP(+)) from Thiobacillus denitrificans (strain ATCC 25259 / T1).